Consider the following 162-residue polypeptide: Ribosome-binding factor A (162 aa).

The tract at residues 123–162 (VARVAAGASPAGDPDPYKEPRVEDADDAEVDEPSRSRQAD) is disordered. The segment covering 125–136 (RVAAGASPAGDP) has biased composition (low complexity).

It belongs to the RbfA family. Monomer. Binds 30S ribosomal subunits, but not 50S ribosomal subunits or 70S ribosomes.

It is found in the cytoplasm. Functionally, one of several proteins that assist in the late maturation steps of the functional core of the 30S ribosomal subunit. Associates with free 30S ribosomal subunits (but not with 30S subunits that are part of 70S ribosomes or polysomes). Required for efficient processing of 16S rRNA. May interact with the 5'-terminal helix region of 16S rRNA. This Rhodococcus opacus (strain B4) protein is Ribosome-binding factor A.